The sequence spans 203 residues: Probable GTP-binding protein EngB (203 aa).

The EngB-type G domain occupies 1 to 190; that stretch reads MPEIVLVGRS…LEALQERVRK (190 aa). Residues 8–15, 35–39, 53–56, 132–135, and 169–171 contribute to the GTP site; these read GRSNVGKS, GVTRK, DMPG, NKID, and ISA. Residues S15 and T37 each contribute to the Mg(2+) site.

This sequence belongs to the TRAFAC class TrmE-Era-EngA-EngB-Septin-like GTPase superfamily. EngB GTPase family. The cofactor is Mg(2+).

Its function is as follows. Necessary for normal cell division and for the maintenance of normal septation. The polypeptide is Probable GTP-binding protein EngB (Methanopyrus kandleri (strain AV19 / DSM 6324 / JCM 9639 / NBRC 100938)).